Here is a 354-residue protein sequence, read N- to C-terminus: Histidinol-phosphate aminotransferase (354 aa).

Positions 1–11 (MKSFLSDKAKS) are enriched in basic and acidic residues. The disordered stretch occupies residues 1 to 33 (MKSFLSDKAKSIEPYTPGEQPKDKNYIKLNTNE). An N6-(pyridoxal phosphate)lysine modification is found at Lys-211.

Belongs to the class-II pyridoxal-phosphate-dependent aminotransferase family. Histidinol-phosphate aminotransferase subfamily. As to quaternary structure, homodimer. The cofactor is pyridoxal 5'-phosphate.

It catalyses the reaction L-histidinol phosphate + 2-oxoglutarate = 3-(imidazol-4-yl)-2-oxopropyl phosphate + L-glutamate. It functions in the pathway amino-acid biosynthesis; L-histidine biosynthesis; L-histidine from 5-phospho-alpha-D-ribose 1-diphosphate: step 7/9. This chain is Histidinol-phosphate aminotransferase, found in Brachyspira hyodysenteriae (strain ATCC 49526 / WA1).